A 346-amino-acid polypeptide reads, in one-letter code: ASVTSPSIFPLSLRKADSGDPVVIACLIKGFFPLGFPEPVKVTWGKSGVVTNYLPSEAGGLYTVISQLSLRADQCPDDASVKCEVQHYTSPSKSVDVPCIVCPPPPPCPCECLLSTVPRLSLSPPAEDLLLSSNASLTCTLRGLRDPKGATFTWSPSSGNVPVLQEPKLEPSGCYSVSSVLPGCAEPWSKKETFSCTASHPELKKSQTVSITKPKEPLFQPQVHVLPPPSEELALNELVTLTCLVRGFSPKEVLVLWLQGHEKLPREKYLVFKPLREPGQSVPTFAVTSLLRVEAEAWLRGDVFSCMVGHEALPLSFTQKSIDRLSGKPTHVNVSVVMAEADGTCY.

Ig-like domains lie at 6–96, 118–212, and 221–323; these read PSIF…KSVD, PRLS…VSIT, and PQVH…KSID. Cys-26 and Cys-83 form a disulfide bridge. The N-linked (GlcNAc...) (complex) asparagine glycan is linked to Asn-134. 2 cysteine pairs are disulfide-bonded: Cys-139–Cys-196 and Cys-243–Cys-306. N-linked (GlcNAc...) (complex) asparagine glycosylation occurs at Asn-333.

Immunoglobulins are composed of two identical heavy chains and two identical light chains; disulfide-linked. Monomeric or polymeric. Part of the secretory IgA (sIgA) complex that consists of two, four or five IgA monomers, and two additional non-Ig polypeptides, namely the JCHAIN and the secretory component (the proteolytic product of PIGR). In terms of processing, N-glycosylated. N-glycans attached to Asn-134 varies from differentially fucosylated complex and hybrid to sialylated with N-glycoyl neuraminic acid types: GlcNAc2Man3GlcNAc2(Fuc); GlcNAc1Man4GlcNAc2(Fuc); GlcNAc1Man4GlcNAc2; Gal1GlcNAc2Man3GlcNAc2(Fuc); GlcNAc2Man3GlcNAc2; Gal1GlcNAc2Man3GlcNAc2; GlcNAc1Man3GlcNAc2; GlcNAc1Man2GlcNAc2 and NeuGc1Gal1GlcNAc2Man3GlcNAc2(Fuc). N-glycans attached to Asn-333 are mainly fucosylated complex types: GlcNAc2Man3GlcNAc2; GlcNAc1Man3GlcNAc2; GlcNAc1Man3GlcNAc2(Fuc); GlcNAc2Man3GlcNAc2(Fuc); Gal1GlcNAc2Man3GlcNAc2(Fuc); NeuGc1Gal1GlcNAc1Man3GlcNAc2(Fuc); NeuGc1Gal1GlcNAc2Man3GlcNAc2(Fuc) and NeuAc1Gal1GlcNAc2Man3GlcNAc2(Fuc).

Its subcellular location is the secreted. It is found in the cell membrane. Constant region of immunoglobulin heavy chains. Immunoglobulins, also known as antibodies, are membrane-bound or secreted glycoproteins produced by B lymphocytes. In the recognition phase of humoral immunity, the membrane-bound immunoglobulins serve as receptors which, upon binding of a specific antigen, trigger the clonal expansion and differentiation of B lymphocytes into immunoglobulins-secreting plasma cells. Secreted immunoglobulins mediate the effector phase of humoral immunity, which results in the elimination of bound antigens. The antigen binding site is formed by the variable domain of one heavy chain, together with that of its associated light chain. Thus, each immunoglobulin has two antigen binding sites with remarkable affinity for a particular antigen. The variable domains are assembled by a process called V-(D)-J rearrangement and can then be subjected to somatic hypermutations which, after exposure to antigen and selection, allow affinity maturation for a particular antigen. Ig alpha is the major immunoglobulin class in body secretions. The chain is Immunoglobulin heavy constant alpha (IGHA) from Equus asinus (Donkey).